Reading from the N-terminus, the 243-residue chain is 3-deoxy-manno-octulosonate cytidylyltransferase (243 aa).

This sequence belongs to the KdsB family.

It localises to the cytoplasm. The catalysed reaction is 3-deoxy-alpha-D-manno-oct-2-ulosonate + CTP = CMP-3-deoxy-beta-D-manno-octulosonate + diphosphate. It functions in the pathway nucleotide-sugar biosynthesis; CMP-3-deoxy-D-manno-octulosonate biosynthesis; CMP-3-deoxy-D-manno-octulosonate from 3-deoxy-D-manno-octulosonate and CTP: step 1/1. The protein operates within bacterial outer membrane biogenesis; lipopolysaccharide biosynthesis. In terms of biological role, activates KDO (a required 8-carbon sugar) for incorporation into bacterial lipopolysaccharide in Gram-negative bacteria. The protein is 3-deoxy-manno-octulosonate cytidylyltransferase of Bartonella henselae (strain ATCC 49882 / DSM 28221 / CCUG 30454 / Houston 1) (Rochalimaea henselae).